Reading from the N-terminus, the 390-residue chain is Cytochrome b (390 aa).

The next 4 membrane-spanning stretches (helical) occupy residues 32-52 (MGSL…FMAM), 76-98 (WFLR…IHMG), 113-133 (LWTI…LGYC), and 179-199 (FFAL…MHMM). Residues H82 and H96 each coordinate heme b. Residues H183 and H197 each contribute to the heme b site. A ubiquinone is bound at residue H202. A run of 4 helical transmembrane segments spans residues 225–245 (FVFK…LFVF), 289–309 (LMGV…PFTD), 321–341 (LSKL…QIGA), and 348–368 (YILM…VFIP).

The protein belongs to the cytochrome b family. In terms of assembly, fungal cytochrome b-c1 complex contains 10 subunits; 3 respiratory subunits, 2 core proteins and 5 low-molecular weight proteins. Cytochrome b-c1 complex is a homodimer. The cofactor is heme b.

It is found in the mitochondrion inner membrane. Functionally, component of the ubiquinol-cytochrome c reductase complex (complex III or cytochrome b-c1 complex) that is part of the mitochondrial respiratory chain. The b-c1 complex mediates electron transfer from ubiquinol to cytochrome c. Contributes to the generation of a proton gradient across the mitochondrial membrane that is then used for ATP synthesis. The protein is Cytochrome b (COB) of Naumovozyma castellii (Yeast).